Here is a 126-residue protein sequence, read N- to C-terminus: Small ribosomal subunit protein uS13 (126 aa).

The segment at arginine 93–lysine 126 is disordered.

It belongs to the universal ribosomal protein uS13 family. As to quaternary structure, part of the 30S ribosomal subunit. Forms a loose heterodimer with protein S19. Forms two bridges to the 50S subunit in the 70S ribosome.

Located at the top of the head of the 30S subunit, it contacts several helices of the 16S rRNA. In the 70S ribosome it contacts the 23S rRNA (bridge B1a) and protein L5 of the 50S subunit (bridge B1b), connecting the 2 subunits; these bridges are implicated in subunit movement. Contacts the tRNAs in the A and P-sites. This is Small ribosomal subunit protein uS13 from Beutenbergia cavernae (strain ATCC BAA-8 / DSM 12333 / CCUG 43141 / JCM 11478 / NBRC 16432 / NCIMB 13614 / HKI 0122).